A 130-amino-acid chain; its full sequence is Small ribosomal subunit protein uS9 (130 aa).

Belongs to the universal ribosomal protein uS9 family.

The protein is Small ribosomal subunit protein uS9 of Ralstonia nicotianae (strain ATCC BAA-1114 / GMI1000) (Ralstonia solanacearum).